The chain runs to 123 residues: UPF0212 protein rrnAC0441 (123 aa).

The protein belongs to the UPF0212 family.

This Haloarcula marismortui (strain ATCC 43049 / DSM 3752 / JCM 8966 / VKM B-1809) (Halobacterium marismortui) protein is UPF0212 protein rrnAC0441.